We begin with the raw amino-acid sequence, 310 residues long: UDP-N-acetylenolpyruvoylglucosamine reductase (310 aa).

The FAD-binding PCMH-type domain maps to 35 to 199 (VGGPAQALFT…TSARFRGTPA (165 aa)). The active site involves Arg179. Ser228 functions as the Proton donor in the catalytic mechanism. Glu298 is a catalytic residue.

The protein belongs to the MurB family. It depends on FAD as a cofactor.

It localises to the cytoplasm. It catalyses the reaction UDP-N-acetyl-alpha-D-muramate + NADP(+) = UDP-N-acetyl-3-O-(1-carboxyvinyl)-alpha-D-glucosamine + NADPH + H(+). It participates in cell wall biogenesis; peptidoglycan biosynthesis. Cell wall formation. The protein is UDP-N-acetylenolpyruvoylglucosamine reductase of Rhodopseudomonas palustris (strain BisB5).